A 1412-amino-acid polypeptide reads, in one-letter code: DNA-directed RNA polymerase subunit beta' (1412 aa).

The Mg(2+) site is built by Asp-543, Asp-545, and Asp-547. Zn(2+) is bound by residues Cys-1017, Cys-1092, Cys-1099, and Cys-1102.

This sequence belongs to the RNA polymerase beta' chain family. As to quaternary structure, the RNAP catalytic core consists of 2 alpha, 1 beta, 1 beta' and 1 omega subunit. When a sigma factor is associated with the core the holoenzyme is formed, which can initiate transcription. Requires Mg(2+) as cofactor. Zn(2+) serves as cofactor.

It carries out the reaction RNA(n) + a ribonucleoside 5'-triphosphate = RNA(n+1) + diphosphate. Its function is as follows. DNA-dependent RNA polymerase catalyzes the transcription of DNA into RNA using the four ribonucleoside triphosphates as substrates. In Mesomycoplasma hyopneumoniae (strain 7448) (Mycoplasma hyopneumoniae), this protein is DNA-directed RNA polymerase subunit beta'.